Reading from the N-terminus, the 228-residue chain is Small ribosomal subunit protein uS3 (228 aa).

One can recognise a KH type-2 domain in the interval 39–107 (IRKELNEKLK…PVNINIEEIK (69 aa)).

The protein belongs to the universal ribosomal protein uS3 family. In terms of assembly, part of the 30S ribosomal subunit. Forms a tight complex with proteins S10 and S14.

Binds the lower part of the 30S subunit head. Binds mRNA in the 70S ribosome, positioning it for translation. The chain is Small ribosomal subunit protein uS3 from Hydrogenovibrio crunogenus (strain DSM 25203 / XCL-2) (Thiomicrospira crunogena).